A 213-amino-acid polypeptide reads, in one-letter code: Motile sperm domain-containing protein 1 (213 aa).

Positions 16 to 143 constitute an MSP domain; the sequence is PVFVFPTELI…KEHLTESLFF (128 aa). The next 2 helical transmembrane spans lie at 159-179 and 191-211; these read SLLTVFLAVVCITALMLPTLG and LSVNQKLVAAYILGLITMAIF. The Nuclear export signal signature appears at 205–208; that stretch reads LITM.

The protein resides in the endoplasmic reticulum membrane. It is found in the golgi apparatus membrane. Plays a role in differentiation and/or proliferation of mesenchymal stem cells. Proposed to be involved in epithelial-to-mesenchymal transition (EMT). However, another study suggests that it is not required for EMT or stem cell self-renewal and acts during later stages of differentiation. The protein is Motile sperm domain-containing protein 1 (MOSPD1) of Bos taurus (Bovine).